Reading from the N-terminus, the 1902-residue chain is Rho GTPase-activating protein 21-B (1902 aa).

Disordered regions lie at residues 1 to 44, 78 to 97, 284 to 317, 348 to 369, 409 to 450, 581 to 603, 613 to 632, and 879 to 902; these read MATR…EGFC, TSVKDEENGNRGVNAGRPRN, RTNRAGPLHRTGLADPSILKRTTSPSSSTPNVPM, PAAHAEESPSPTNHYASPGSHQ, NTTD…SQER, TRNFQNSSRAPHPRPALSDRSGF, IPTPYAAKPHSPSVRSDDGI, and KARENVQSSEDSESRKDSSSDVFS. Positions 10-22 are enriched in polar residues; that stretch reads EQQQEPSSPASEI. A PDZ domain is found at 77 to 162; it reads HTSVKDEENG…TLELSVMPKD (86 aa). A compositionally biased stretch (low complexity) spans 305-317; sequence TTSPSSSTPNVPM. The span at 409 to 424 shows a compositional bias: polar residues; that stretch reads NTTDYNQMLPNRSSGQ. The 114-residue stretch at 903 to 1016 folds into the PH domain; it reads DSNKEGFLYF…WIKAIQENGN (114 aa). The span at 1039-1063 shows a compositional bias: polar residues; sequence TMMSSSSNKTEPSPKAQRQTLSIRQ. The tract at residues 1039-1095 is disordered; sequence TMMSSSSNKTEPSPKAQRQTLSIRQQFRAGKPDDDISPPKDKGSWRRIMKKPFEKKP. The segment covering 1068 to 1082 has biased composition (basic and acidic residues); sequence GKPDDDISPPKDKGS. Positions 1103-1295 constitute a Rho-GAP domain; it reads VRLDDCPPAH…TLIQKHDWFF (193 aa). Disordered regions lie at residues 1306-1357, 1375-1394, 1494-1520, 1559-1704, 1729-1748, and 1803-1890; these read TVHE…GSGK, RKRKKQKDKPQPSSSEDELD, MSDSGTMLSTSSQASVQGSKPKVVSPE, VQSV…EPAW, QKANAAETRKKKNIRRRHTL, and TSTS…KLSG. The segment covering 1339 to 1357 has biased composition (low complexity); it reads SDSATSDSAKSKGSWGSGK. The segment covering 1494–1511 has biased composition (polar residues); sequence MSDSGTMLSTSSQASVQG. Composition is skewed to basic and acidic residues over residues 1575–1585 and 1601–1613; these read SELVSEGRPME and FDRRHQSKAEEPS. Residues 1614–1630 are compositionally biased toward polar residues; sequence RNVQVNSEGSPSCTEGS. Basic and acidic residues-rich tracts occupy residues 1634 to 1652 and 1661 to 1673; these read KMDRRRFSSHKLIECDTLS and TDSDCSAESKTEE. Residues 1737 to 1748 are compositionally biased toward basic residues; that stretch reads RKKKNIRRRHTL. Over residues 1865-1878 the composition is skewed to polar residues; that stretch reads NGDSFQSKNKNNFS.

Its subcellular location is the golgi apparatus membrane. The protein resides in the cell junction. The protein localises to the cytoplasmic vesicle membrane. It localises to the cytoplasm. It is found in the cytoskeleton. GTPase-activating protein (GAP) for rhoa and cdc42. In Xenopus laevis (African clawed frog), this protein is Rho GTPase-activating protein 21-B (arhgap21-b).